The chain runs to 152 residues: Deoxyuridine 5'-triphosphate nucleotidohydrolase (152 aa).

Substrate contacts are provided by residues Arg-62–Gly-64, Asn-75, and Thr-79–Asp-81.

This sequence belongs to the dUTPase family. Mg(2+) serves as cofactor.

It carries out the reaction dUTP + H2O = dUMP + diphosphate + H(+). The protein operates within pyrimidine metabolism; dUMP biosynthesis; dUMP from dCTP (dUTP route): step 2/2. This enzyme is involved in nucleotide metabolism: it produces dUMP, the immediate precursor of thymidine nucleotides and it decreases the intracellular concentration of dUTP so that uracil cannot be incorporated into DNA. The protein is Deoxyuridine 5'-triphosphate nucleotidohydrolase of Leifsonia xyli subsp. xyli (strain CTCB07).